We begin with the raw amino-acid sequence, 733 residues long: Photosystem I P700 chlorophyll a apoprotein A2 (733 aa).

A run of 8 helical transmembrane segments spans residues 46-69 (IFASHFGHLAIIFLWTSGTLFHVA), 135-158 (LYQGAVFLLILSSLFLFAGWLHLQ), 175-199 (LNHHLAGLFGVSSLAWTGHLVHVAI), 273-291 (IAHHHLAIAVLFIIAGHMY), 330-353 (LHFQLGLALASLGVITSLVAQHMY), 369-395 (AALYTHHQYIAGFLMVGAFAHGAIFFV), 417-439 (ALISHLSWVSLFLGFHTLGLYVH), and 516-534 (FLVHHAIALGLHTTTLILV). Positions 558 and 567 each coordinate [4Fe-4S] cluster. A run of 2 helical transmembrane segments spans residues 574 to 595 (AFYLAMFWMLNTLGWLTFYWHW) and 642 to 664 (LSVWAWMFLFGHLVWATGFMFLI). His-653, Met-661, and Tyr-669 together coordinate chlorophyll a. Residue Trp-670 coordinates phylloquinone. A helical membrane pass occupies residues 706 to 726 (LVGLAHFTVGYVLTYAAFLIA).

The protein belongs to the PsaA/PsaB family. In terms of assembly, the PsaA/B heterodimer binds the P700 chlorophyll special pair and subsequent electron acceptors. PSI consists of a core antenna complex that captures photons, and an electron transfer chain that converts photonic excitation into a charge separation. The cyanobacterial PSI reaction center is composed of one copy each of PsaA,B,C,D,E,F,I,J,K,L,M and X, and forms trimeric complexes. PSI electron transfer chain: 5 chlorophyll a, 1 chlorophyll a', 2 phylloquinones and 3 4Fe-4S clusters. PSI core antenna: 90 chlorophyll a, 22 carotenoids, 3 phospholipids and 1 galactolipid. P700 is a chlorophyll a/chlorophyll a' dimer, A0 is one or more chlorophyll a, A1 is one or both phylloquinones and FX is a shared 4Fe-4S iron-sulfur center. serves as cofactor.

It is found in the cellular thylakoid membrane. The catalysed reaction is reduced [plastocyanin] + hnu + oxidized [2Fe-2S]-[ferredoxin] = oxidized [plastocyanin] + reduced [2Fe-2S]-[ferredoxin]. In terms of biological role, psaA and PsaB bind P700, the primary electron donor of photosystem I (PSI), as well as the electron acceptors A0, A1 and FX. PSI is a plastocyanin/cytochrome c6-ferredoxin oxidoreductase, converting photonic excitation into a charge separation, which transfers an electron from the donor P700 chlorophyll pair to the spectroscopically characterized acceptors A0, A1, FX, FA and FB in turn. Oxidized P700 is reduced on the lumenal side of the thylakoid membrane by plastocyanin or cytochrome c6. In Picosynechococcus sp. (strain ATCC 27264 / PCC 7002 / PR-6) (Agmenellum quadruplicatum), this protein is Photosystem I P700 chlorophyll a apoprotein A2.